A 91-amino-acid chain; its full sequence is PqqA binding protein (91 aa).

The protein belongs to the PqqD family. In terms of assembly, monomer. Interacts with PqqE.

It functions in the pathway cofactor biosynthesis; pyrroloquinoline quinone biosynthesis. Its function is as follows. Functions as a PqqA binding protein and presents PqqA to PqqE, in the pyrroloquinoline quinone (PQQ) biosynthetic pathway. This Pseudomonas fluorescens (strain Pf0-1) protein is PqqA binding protein.